The following is a 375-amino-acid chain: Probable G-protein coupled receptor 34 (375 aa).

Over 1–54 the chain is Extracellular; it reads MTTTSVDSWLCSSHGMHFITNYSDQASQNFSGVPNVTSCPMDEKLLSTVLTTFY. N-linked (GlcNAc...) asparagine glycans are attached at residues asparagine 21, asparagine 29, and asparagine 35. The helical transmembrane segment at 55–75 threads the bilayer; that stretch reads SVIFLVGLVGNIIALYVFLGI. The Cytoplasmic portion of the chain corresponds to 76 to 81; that stretch reads HRKRNS. A helical transmembrane segment spans residues 82 to 102; that stretch reads IQIYLLNVAVADLLLIFCLPF. Topologically, residues 103-121 are extracellular; that stretch reads RIMYHINQNKWTLGVILCK. An intrachain disulfide couples cysteine 120 to cysteine 197. A helical membrane pass occupies residues 122 to 142; it reads VVGTLFYMNMYISIILLGFIS. Residues 143–164 lie on the Cytoplasmic side of the membrane; that stretch reads LDRYIKINRSIQQRRAITTKQS. A helical membrane pass occupies residues 165–185; it reads IYVCCIVWTVALAGFLTMIIL. Over 186 to 209 the chain is Extracellular; that stretch reads TLKKGGHNSTMCFHYRDRHNAKGE. Asparagine 193 is a glycosylation site (N-linked (GlcNAc...) asparagine). A helical transmembrane segment spans residues 210–230; sequence AIFNFVLVVMFWLIFLLIILS. Topologically, residues 231–262 are cytoplasmic; it reads YIKIGKNLLRISKRRSKFPNSGKYATTARNSF. The chain crosses the membrane as a helical span at residues 263–283; sequence IVLIIFTICFVPYHAFRFIYI. Topologically, residues 284–303 are extracellular; that stretch reads SSQLNVSSCYWKEIIHKTNE. N-linked (GlcNAc...) asparagine glycosylation is present at asparagine 288. Residues 304–324 traverse the membrane as a helical segment; that stretch reads IMLVFSSFNSCLDPVMYFLMS. Topologically, residues 325–375 are cytoplasmic; it reads SNIRKIMCQLLFRRFQSEASRSESTSEFKPGHSLHDLSVTVKMPQYSTKGN.

The protein belongs to the G-protein coupled receptor 1 family. As to expression, highly expressed in glial cells such as astrocytes and microglia.

The protein localises to the cell membrane. In terms of biological role, G-protein-coupled receptor of lysophosphatidylserine (LysoPS) that plays different roles in immune response. Acts a damage-sensing receptor that triggers tissue repair upon recognition of dying neutrophils. Mechanistically, apoptotic neutrophils release lysophosphatydilserine that are recognized by type 3 innate lymphoid cells (ILC3s) via GPR34, which activates downstream PI3K-AKT and RAS-ERK signaling pathways leading to STAT3 activation and IL-22 production. Plays an important role in microglial function, controlling morphology and phagocytosis. The sequence is that of Probable G-protein coupled receptor 34 (Gpr34) from Mus musculus (Mouse).